Reading from the N-terminus, the 409-residue chain is Histidine--tRNA ligase (409 aa).

This sequence belongs to the class-II aminoacyl-tRNA synthetase family.

The protein resides in the cytoplasm. The catalysed reaction is tRNA(His) + L-histidine + ATP = L-histidyl-tRNA(His) + AMP + diphosphate + H(+). This Methanosphaerula palustris (strain ATCC BAA-1556 / DSM 19958 / E1-9c) protein is Histidine--tRNA ligase.